A 1889-amino-acid chain; its full sequence is Treslin (1889 aa).

Residues S295, S599, S820, S861, S919, S934, S1002, S1027, and S1078 each carry the phosphoserine modification. Residues 812–832 (DSMSQESMSPPPSSSTHRSVS) show a composition bias toward low complexity. The tract at residues 812-836 (DSMSQESMSPPPSSSTHRSVSAITE) is disordered. Residues 979-1063 (RLLHRQIKGR…RENFPVQSIQ (85 aa)) form a disordered region. Residues 1020 to 1050 (LSFSRTNSGSFYSVSQPKSRSVQRIHSSQQE) show a composition bias toward polar residues. Disordered stretches follow at residues 1098–1421 (EIST…SQFS), 1471–1508 (LPGE…SSSE), 1520–1543 (GKQR…SPQT), 1630–1714 (SCTP…SLEQ), 1730–1751 (VCQL…ETSW), and 1841–1875 (QGRT…TLSR). Polar residues predominate over residues 1127-1179 (TAQTLLYTPERLQNSPTEMTSAEGTISEATIKTPSSHGYNSPFASKVTSQKTV). At T1134 the chain carries Phosphothreonine. At S1141 the chain carries Phosphoserine. The segment covering 1187–1197 (SPPLTKLPSTP) has biased composition (low complexity). Positions 1203-1219 (QPPQCSSDCTWPHSVNS) are enriched in polar residues. Positions 1339 to 1351 (TSPSVTSSVSCPV) are enriched in low complexity. Residues 1373 to 1382 (KLRRSCRKKS) show a composition bias toward basic residues. At S1406 the chain carries Phosphoserine. Positions 1496–1508 (LVPAPSSVSSSSE) are enriched in low complexity. Polar residues-rich tracts occupy residues 1525–1543 (DAAQ…SPQT) and 1652–1662 (WTPSPKQSGKT). A compositionally biased stretch (basic and acidic residues) spans 1705-1714 (PEGKERSLEQ).

This sequence belongs to the treslin family. As to quaternary structure, interacts with TOPBP1 (via BRCT domains); interaction takes place in a CDK2-dependent manner. Component of the replisome complex composed of at least DONSON, MCM2, MCM7, PCNA and TICRR.

The protein localises to the nucleus. Functionally, regulator of DNA replication and S/M and G2/M checkpoints. Regulates the triggering of DNA replication initiation via its interaction with TOPBP1 by participating in CDK2-mediated loading of CDC45L onto replication origins. Required for the transition from pre-replication complex (pre-RC) to pre-initiation complex (pre-IC). Required to prevent mitotic entry after treatment with ionizing radiation. The protein is Treslin (Ticrr) of Mus musculus (Mouse).